Reading from the N-terminus, the 175-residue chain is Gamma-crystallin B (175 aa).

Beta/gamma crystallin 'Greek key' domains are found at residues 2 to 40 (GKIT…RVES) and 41 to 83 (GCWM…CLIP). The interval 84–88 (PHSGA) is connecting peptide. Beta/gamma crystallin 'Greek key' domains are found at residues 89–129 (YRMK…NVLE) and 130–172 (GSWI…RRVM).

It belongs to the beta/gamma-crystallin family. In terms of assembly, monomer.

In terms of biological role, crystallins are the dominant structural components of the vertebrate eye lens. The chain is Gamma-crystallin B (CRYGB) from Homo sapiens (Human).